The primary structure comprises 304 residues: E3 ubiquitin-protein ligase CHIP (304 aa).

Over residues 1–10 the composition is skewed to basic and acidic residues; it reads MKGKEEKEGG. Residues 1 to 30 form a disordered region; it reads MKGKEEKEGGARLGTGGGGSPDKSPSAQEL. Lys2 participates in a covalent cross-link: Glycyl lysine isopeptide (Lys-Gly) (interchain with G-Cter in ubiquitin). Residues 11-20 are compositionally biased toward gly residues; the sequence is ARLGTGGGGS. Ser20 carries the phosphoserine modification. Residue Lys23 forms a Glycyl lysine isopeptide (Lys-Gly) (interchain with G-Cter in ubiquitin) linkage. Ser24 and Ser26 each carry phosphoserine. TPR repeat units lie at residues 27–60, 61–94, and 96–128; these read AQEL…NPLV, AVYY…DGQS, and KAHF…AKEQ. The required for interaction with MAPK7 stretch occupies residues 102-201; that stretch reads GQCQLEMESY…GHIRAQQACI (100 aa). Positions 143 to 197 are required for interaction with and ubiquitination of MYOCD; that stretch reads AKKKRWNSIEERRIHQESELHSYLTRLIAAERERELEECQRNHEGHEDDGHIRAQ. The tract at residues 144–198 is required for interaction with FOXO1; that stretch reads KKKRWNSIEERRIHQESELHSYLTRLIAAERERELEECQRNHEGHEDDGHIRAQQ. The tract at residues 144-304 is required for ubiquitination of FOXO1; that stretch reads KKKRWNSIEE…ISENGWVEDY (161 aa). At Ser150 the chain carries Phosphoserine. Residues Lys222 and Lys256 each participate in a glycyl lysine isopeptide (Lys-Gly) (interchain with G-Cter in ubiquitin) cross-link. The U-box domain maps to 227–301; it reads DIPDYLCGKI…DAFISENGWV (75 aa). Residue Ser274 is modified to Phosphoserine.

Homodimer. Interacts with BAG2, and with the E2 ubiquitin conjugating enzymes UBE2D1, UBE2D2 and UBE2D3. Detected in a ternary complex containing STUB1, HSPA1A and HSPBP1. Part of a complex composed of STUB1/CHIP, VCP/p97, CHRNA3, and UBXN2A that modulates the ubiquitination and endoplasmic reticulum-associated degradation (ERAD) of CHRNA3. Within the complex UBXN2A acts as a scaffold protein required for the interaction of CHRNA3 with VCP/p97, this interaction also inhibits CHRNA3 ubiquitination by STUB1/CHIP and subsequently ERAD. Interacts with MKKS. Interacts with DNAAF4. Interacts (via the U-box domain) with the UBE2V2-UBE2N heterodimer; the complex has a specific 'Lys-63'-linked polyubiquitination activity. Interacts (when monoubiquitinated) with ATXN3. Interacts with UBE2W. Interacts with DNAJB6. Interacts with FLCN and HSP90AA1. Interacts with HSP90. Interacts with UBE2N and UBE2V1. Interacts (via TPR repeats) with HSPA8 (via C-terminus). Interacts (via TPR repeats) with HSPA1A (via C-terminus). Interacts with the non-acetylated form of HSPA1A and HSPA1B. Interacts with SMAD3 and HSP90AB1. Interacts with UBE4B. Interacts with PRMT5. Interacts with MYOCD (via C-terminus). Interacts with FOXO1 (when phosphorylated on 'Ser-253'). Interacts with MAPK7/ERK5; the interaction is enhanced in the presence of IGF1 or MAP2K5 and promotes STUB1/CHIP E3 ligase activity. Interacts with and ubiquitinates ESR1; the interaction is promoted in the absence of estradiol (17-beta-estradiol/E2). Interacts with ESR2. Interacts with and ubiquitinates NFATC3; HSPA1A/HSP70 is required as a co-chaperone. In macrophages, interacts with PAQR3; the interaction promotes PPARG poylubiquitination and STUB1-mediated degradation. Component of the chaperone-assisted selective autophagy (CASA) complex consisting of BAG3, HSPA8/HSC70, HSPB8 and STUB1/CHIP. Auto-ubiquitinated; mediated by UBE2D1 and UBE2D2 and enhanced in the presence of MAP2K5. Monoubiquitinated at Lys-2 following cell stress by UBE2W, promoting the interaction with ATXN3. In terms of tissue distribution, expressed in the brain.

The protein localises to the cytoplasm. It is found in the nucleus. Its subcellular location is the mitochondrion. The catalysed reaction is S-ubiquitinyl-[E2 ubiquitin-conjugating enzyme]-L-cysteine + [acceptor protein]-L-lysine = [E2 ubiquitin-conjugating enzyme]-L-cysteine + N(6)-ubiquitinyl-[acceptor protein]-L-lysine.. It functions in the pathway protein modification; protein ubiquitination. Functionally, E3 ubiquitin-protein ligase which targets misfolded chaperone substrates towards proteasomal degradation. Plays a role in the maintenance of mitochondrial morphology and promotes mitophagic removal of dysfunctional mitochondria; thereby acts as a protector against apoptosis in response to cellular stress. Negatively regulates vascular smooth muscle contraction, via degradation of the transcriptional activator MYOCD and subsequent loss of transcription of genes involved in vascular smooth muscle contraction. Promotes survival and proliferation of cardiac smooth muscle cells via ubiquitination and degradation of FOXO1, resulting in subsequent repression of FOXO1-mediated transcription of pro-apoptotic genes. Ubiquitinates ICER-type isoforms of CREM and targets them for proteasomal degradation, thereby acts as a positive effector of MAPK/ERK-mediated inhibition of apoptosis in cardiomyocytes. Inhibits lipopolysaccharide-induced apoptosis and hypertrophy in cardiomyocytes, via ubiquitination and subsequent proteasomal degradation of NFATC3. Collaborates with ATXN3 in the degradation of misfolded chaperone substrates: ATXN3 restricting the length of ubiquitin chain attached to STUB1/CHIP substrates and preventing further chain extension. Ubiquitinates NOS1 in concert with Hsp70 and Hsp40. Modulates the activity of several chaperone complexes, including Hsp70, Hsc70 and Hsp90. Ubiquitinates CHRNA3 targeting it for endoplasmic reticulum-associated degradation in cortical neurons, as part of the STUB1-VCP-UBXN2A complex. Ubiquitinates and promotes ESR1 proteasomal degradation in response to age-related circulating estradiol (17-beta-estradiol/E2) decline, thereby promotes neuronal apoptosis in response to ischemic reperfusion injury. Mediates transfer of non-canonical short ubiquitin chains to HSPA8 that have no effect on HSPA8 degradation. Mediates polyubiquitination of DNA polymerase beta (POLB) at 'Lys-41', 'Lys-61' and 'Lys-81', thereby playing a role in base-excision repair: catalyzes polyubiquitination by amplifying the HUWE1/ARF-BP1-dependent monoubiquitination and leading to POLB-degradation by the proteasome. Mediates polyubiquitination of CYP3A4. Ubiquitinates EPHA2 and may regulate the receptor stability and activity through proteasomal degradation. Acts as a co-chaperone for HSPA1A and HSPA1B chaperone proteins and promotes ubiquitin-mediated protein degradation. Negatively regulates the suppressive function of regulatory T-cells (Treg) during inflammation by mediating the ubiquitination and degradation of FOXP3 in a HSPA1A/B-dependent manner. Catalyzes monoubiquitination of SIRT6, preventing its degradation by the proteasome. Likely mediates polyubiquitination and down-regulates plasma membrane expression of PD-L1/CD274, an immune inhibitory ligand critical for immune tolerance to self and antitumor immunity. Negatively regulates TGF-beta signaling by modulating the basal level of SMAD3 via ubiquitin-mediated degradation. Plays a role in the degradation of TP53. Mediates ubiquitination of RIPK3 leading to its subsequent proteasome-dependent degradation. May regulate myosin assembly in striated muscles together with UBE4B and VCP/p97 by targeting myosin chaperone UNC45B for proteasomal degradation. Ubiquitinates PPARG in macrophages playing a role in M2 macrophages polarization and angiogenesis. The chain is E3 ubiquitin-protein ligase CHIP from Mus musculus (Mouse).